The following is a 680-amino-acid chain: MTNPLLTSFSLPPFSAIKPEHVVPAVTKALADCRAAVEGVVAHGAPYSWENLCQPLAEADDVLGRIFSPISHLNSVKNSPELREAYEQTLPLLSEYSTWVGQHEGLYNAYRDLRDGDHYATLNTAQKKAVDNALRDFELSGIGLPKEKQQRYGEIATRLSELGNQYSNNVLDATMGWTKLITDEAELAGMPESALAAAKAQAEAKEQEGYLLTLDIPSYLPVMTYCDNQALREEMYRAYSTRASDQGPNAGKWDNSPVMEEILALRHELAQLLGFENYAHESLATKMAENPQQVLDFLTDLAKRARPQGEKELAQLRAFAKAEFGVEELQPWDIAYYSEKQKQHLYSISDEQLRPYFPENKAVNGLFEVVKRIYGITAKERTDVDVWHPEVRFFELYDENNELRGSFYLDLYAREHKRGGAWMDDCVGQMRKADGTLQKPVAYLTCNFNRPVNGKPALFTHDEVITLFHEFGHGLHHMLTRIETAGVSGISGVPWDAVELPSQFMENWCWEPEALAFISGHYETGEPLPKELLDKMLAAKNYQAALFILRQLEFGLFDFRLHAEFNPQQGAKILETLFEIKKQVAVVPSPTWGRFPHAFSHIFAGGYAAGYYSYLWADVLAADAYSRFEEEGIFNRETGQSFLDNILTRGGSEEPMELFKRFRGREPQLDAMLEHYGIKG.

His469 contacts Zn(2+). Glu470 is a catalytic residue. His473 and His476 together coordinate Zn(2+).

This sequence belongs to the peptidase M3 family. Requires Zn(2+) as cofactor.

The enzyme catalyses Hydrolysis of oligopeptides, with broad specificity. Gly or Ala commonly occur as P1 or P1' residues, but more distant residues are also important, as is shown by the fact that Z-Gly-Pro-Gly-|-Gly-Pro-Ala is cleaved, but not Z-(Gly)(5).. In terms of biological role, may play a specific role in the degradation of signal peptides after they are released from precursor forms of secreted proteins. Can cleave N-acetyl-L-Ala(4). This is Oligopeptidase A (prlC) from Salmonella typhimurium (strain LT2 / SGSC1412 / ATCC 700720).